A 326-amino-acid polypeptide reads, in one-letter code: Beta-ketoacyl-[acyl-carrier-protein] synthase III (326 aa).

Residues Cys-120 and His-253 contribute to the active site. Residues 254–258 (QANIR) form an ACP-binding region. The active site involves Asn-283.

This sequence belongs to the thiolase-like superfamily. FabH family. Homodimer.

The protein localises to the cytoplasm. It catalyses the reaction malonyl-[ACP] + acetyl-CoA + H(+) = 3-oxobutanoyl-[ACP] + CO2 + CoA. Its pathway is lipid metabolism; fatty acid biosynthesis. Catalyzes the condensation reaction of fatty acid synthesis by the addition to an acyl acceptor of two carbons from malonyl-ACP. Catalyzes the first condensation reaction which initiates fatty acid synthesis and may therefore play a role in governing the total rate of fatty acid production. Possesses both acetoacetyl-ACP synthase and acetyl transacylase activities. Its substrate specificity determines the biosynthesis of branched-chain and/or straight-chain of fatty acids. The polypeptide is Beta-ketoacyl-[acyl-carrier-protein] synthase III (Cupriavidus necator (strain ATCC 17699 / DSM 428 / KCTC 22496 / NCIMB 10442 / H16 / Stanier 337) (Ralstonia eutropha)).